A 213-amino-acid chain; its full sequence is Pyridoxine/pyridoxamine 5'-phosphate oxidase (213 aa).

Substrate contacts are provided by residues 8 to 11 (RREY) and K66. FMN contacts are provided by residues 61 to 66 (RIVLLK), 76 to 77 (YT), R82, K83, and Q105. 3 residues coordinate substrate: Y123, R127, and S131. Residues 140–141 (QS) and W185 each bind FMN. 191-193 (RLH) serves as a coordination point for substrate. R195 is a binding site for FMN.

Belongs to the pyridoxamine 5'-phosphate oxidase family. Homodimer. Requires FMN as cofactor.

The catalysed reaction is pyridoxamine 5'-phosphate + O2 + H2O = pyridoxal 5'-phosphate + H2O2 + NH4(+). The enzyme catalyses pyridoxine 5'-phosphate + O2 = pyridoxal 5'-phosphate + H2O2. It participates in cofactor metabolism; pyridoxal 5'-phosphate salvage; pyridoxal 5'-phosphate from pyridoxamine 5'-phosphate: step 1/1. Its pathway is cofactor metabolism; pyridoxal 5'-phosphate salvage; pyridoxal 5'-phosphate from pyridoxine 5'-phosphate: step 1/1. Catalyzes the oxidation of either pyridoxine 5'-phosphate (PNP) or pyridoxamine 5'-phosphate (PMP) into pyridoxal 5'-phosphate (PLP). The protein is Pyridoxine/pyridoxamine 5'-phosphate oxidase of Pseudoalteromonas atlantica (strain T6c / ATCC BAA-1087).